We begin with the raw amino-acid sequence, 208 residues long: MIVLALDVYEGERAIKIAKSVKDYISMIKVNWPLILGSGVDIIRRLKEETGVEIIADLKLADIPNTNRLIARKVFGAGADYVIVHTFVGRDSVMAVKELGEIIMVVEMSHPGALEFINPLTDRFIEVANEIEPFGVIAPGTRPERIGYIRDRLKEGIKILAPGIGAQGGKAKDAVKAGADYIIVGRAIYNAPNPREAAKAIYDEIRGV.

Residues aspartate 7, lysine 29, 57 to 66, serine 109, 162 to 172, glycine 185, and arginine 186 contribute to the substrate site; these read DLKLADIPNT and PGIGAQGGKAK. Lysine 59 serves as the catalytic Proton donor.

The protein belongs to the OMP decarboxylase family. Type 1 subfamily. As to quaternary structure, homodimer.

It catalyses the reaction orotidine 5'-phosphate + H(+) = UMP + CO2. The protein operates within pyrimidine metabolism; UMP biosynthesis via de novo pathway; UMP from orotate: step 2/2. Functionally, catalyzes the decarboxylation of orotidine 5'-monophosphate (OMP) to uridine 5'-monophosphate (UMP). The protein is Orotidine 5'-phosphate decarboxylase (pyrF) of Pyrococcus horikoshii (strain ATCC 700860 / DSM 12428 / JCM 9974 / NBRC 100139 / OT-3).